The primary structure comprises 113 residues: T cell receptor alpha variable 8-6 (113 aa).

An N-terminal signal peptide occupies residues 1–20; it reads MLLLLVPAFQVIFTLGGTRA. Positions 21 to 113 constitute an Ig-like domain; the sequence is QSVTQLDSQV…DTAEYFCAVS (93 aa). Cysteines 42 and 110 form a disulfide. N-linked (GlcNAc...) asparagine glycosylation is found at Asn-43 and Asn-87.

Alpha-beta TR is a heterodimer composed of an alpha and beta chain; disulfide-linked. The alpha-beta TR is associated with the transmembrane signaling CD3 coreceptor proteins to form the TR-CD3 (TcR or TCR). The assembly of alpha-beta TR heterodimers with CD3 occurs in the endoplasmic reticulum where a single alpha-beta TR heterodimer associates with one CD3D-CD3E heterodimer, one CD3G-CD3E heterodimer and one CD247 homodimer forming a stable octameric structure. CD3D-CD3E and CD3G-CD3E heterodimers preferentially associate with TR alpha and TR beta chains, respectively. The association of the CD247 homodimer is the last step of TcR assembly in the endoplasmic reticulum and is required for transport to the cell surface.

It is found in the cell membrane. Functionally, v region of the variable domain of T cell receptor (TR) alpha chain that participates in the antigen recognition. Alpha-beta T cell receptors are antigen specific receptors which are essential to the immune response and are present on the cell surface of T lymphocytes. Recognize peptide-major histocompatibility (MH) (pMH) complexes that are displayed by antigen presenting cells (APC), a prerequisite for efficient T cell adaptive immunity against pathogens. Binding of alpha-beta TR to pMH complex initiates TR-CD3 clustering on the cell surface and intracellular activation of LCK that phosphorylates the ITAM motifs of CD3G, CD3D, CD3E and CD247 enabling the recruitment of ZAP70. In turn ZAP70 phosphorylates LAT, which recruits numerous signaling molecules to form the LAT signalosome. The LAT signalosome propagates signal branching to three major signaling pathways, the calcium, the mitogen-activated protein kinase (MAPK) kinase and the nuclear factor NF-kappa-B (NF-kB) pathways, leading to the mobilization of transcription factors that are critical for gene expression and essential for T cell growth and differentiation. The T cell repertoire is generated in the thymus, by V-(D)-J rearrangement. This repertoire is then shaped by intrathymic selection events to generate a peripheral T cell pool of self-MH restricted, non-autoaggressive T cells. Post-thymic interaction of alpha-beta TR with the pMH complexes shapes TR structural and functional avidity. This Homo sapiens (Human) protein is T cell receptor alpha variable 8-6.